We begin with the raw amino-acid sequence, 1208 residues long: Chromosome partition protein Smc (1208 aa).

32–39 (PNGCGKSN) is a binding site for ATP. Coiled coils occupy residues 170–205 (VTKY…GERI), 239–504 (EARA…ARVQ), and 694–1054 (VIER…QLQD).

This sequence belongs to the SMC family. Homodimer.

It is found in the cytoplasm. In terms of biological role, required for chromosome condensation and partitioning. This chain is Chromosome partition protein Smc, found in Thauera aminoaromatica.